We begin with the raw amino-acid sequence, 841 residues long: Probable outer membrane usher protein EcpC (841 aa).

A signal peptide spans 1-29 (MPLRRFSPGLKAQFAFGMVFLFVQPDASA).

It belongs to the EcpC/MatD family.

Part of the ecpRABCDE operon, which encodes the E.coli common pilus (ECP). ECP is found in both commensal and pathogenic strains and plays a dual role in early-stage biofilm development and host cell recognition. The polypeptide is Probable outer membrane usher protein EcpC (ecpC) (Escherichia coli O127:H6 (strain E2348/69 / EPEC)).